An 89-amino-acid chain; its full sequence is Cytochrome c oxidase subunit 7A, mitochondrial (89 aa).

The transit peptide at 1–31 (MMNLSRAVVRSFATTAGRRSAAVPKDQIEKG) directs the protein to the mitochondrion. Topologically, residues 32-58 (YFEIRKVQEHFQKKDGKPVFLKGSVVD) are mitochondrial matrix. A helical membrane pass occupies residues 59-81 (NVLYRVTVALALVGIGGMGKLFY). Residues 82–89 (ELSVPKKE) are Mitochondrial intermembrane-facing.

It belongs to the cytochrome c oxidase VIIa family. As to quaternary structure, component of the cytochrome c oxidase (complex IV, CIV), a multisubunit enzyme composed of a catalytic core of 3 subunits and several supernumerary subunits. The complex exists as a monomer or a dimer and forms supercomplexes (SCs) in the inner mitochondrial membrane with ubiquinol-cytochrome c oxidoreductase (cytochrome b-c1 complex, complex III, CIII).

The protein localises to the mitochondrion inner membrane. The protein operates within energy metabolism; oxidative phosphorylation. Component of the cytochrome c oxidase, the last enzyme in the mitochondrial electron transport chain which drives oxidative phosphorylation. The respiratory chain contains 3 multisubunit complexes succinate dehydrogenase (complex II, CII), ubiquinol-cytochrome c oxidoreductase (cytochrome b-c1 complex, complex III, CIII) and cytochrome c oxidase (complex IV, CIV), that cooperate to transfer electrons derived from NADH and succinate to molecular oxygen, creating an electrochemical gradient over the inner membrane that drives transmembrane transport and the ATP synthase. Cytochrome c oxidase is the component of the respiratory chain that catalyzes the reduction of oxygen to water. Electrons originating from reduced cytochrome c in the intermembrane space (IMS) are transferred via the dinuclear copper A center (CU(A)) of subunit 2 and heme A of subunit 1 to the active site in subunit 1, a binuclear center (BNC) formed by heme A3 and copper B (CU(B)). The BNC reduces molecular oxygen to 2 water molecules using 4 electrons from cytochrome c in the IMS and 4 protons from the mitochondrial matrix. This is Cytochrome c oxidase subunit 7A, mitochondrial from Drosophila melanogaster (Fruit fly).